A 428-amino-acid polypeptide reads, in one-letter code: Leucine-rich repeat-containing protein 42 (428 aa).

LRR repeat units lie at residues 149–170 (VLCSLCLRNRYLVISEKLEEIK), 174–195 (ELTCLDLSCCKLGDEHELLEHL), 202–222 (SVTQLHLKDNCLSDAGVRKMT), 234–255 (NLTLLDLSCNPEITDAGIGYLF), and 259–280 (KLNCLDISGTGLKDIKTVKHKL). Positions 379–412 (KHEAISSQESKKSKKRPFEESETEQNNSSQPSKQ) are disordered. Residues Ser406 and Ser407 each carry the phosphoserine modification.

This sequence belongs to the LRRC42 family.

The sequence is that of Leucine-rich repeat-containing protein 42 (LRRC42) from Homo sapiens (Human).